Here is a 267-residue protein sequence, read N- to C-terminus: Ribosomal RNA small subunit methyltransferase A (267 aa).

S-adenosyl-L-methionine is bound by residues Asn-18, Leu-20, Gly-45, Glu-66, Asp-91, and Asn-112.

The protein belongs to the class I-like SAM-binding methyltransferase superfamily. rRNA adenine N(6)-methyltransferase family. RsmA subfamily.

Its subcellular location is the cytoplasm. It catalyses the reaction adenosine(1518)/adenosine(1519) in 16S rRNA + 4 S-adenosyl-L-methionine = N(6)-dimethyladenosine(1518)/N(6)-dimethyladenosine(1519) in 16S rRNA + 4 S-adenosyl-L-homocysteine + 4 H(+). Specifically dimethylates two adjacent adenosines (A1518 and A1519) in the loop of a conserved hairpin near the 3'-end of 16S rRNA in the 30S particle. May play a critical role in biogenesis of 30S subunits. The protein is Ribosomal RNA small subunit methyltransferase A of Shewanella sediminis (strain HAW-EB3).